The chain runs to 297 residues: 4-hydroxybenzoate octaprenyltransferase (297 aa).

9 consecutive transmembrane segments (helical) span residues 29–49 (IGTYLLLWPTLWALWIAAEGV), 55–75 (LFIFITGVILMRAAGCVVNDF), 102–122 (AWTLFAVLVGLSFGLVLLTNA), 124–141 (TVYLSFGALALAACYPFM), 146–166 (FYPQVVLGAAFSWGMPMAFTA), 169–189 (GSLPPEAWLLFIANLLWTVAY), 219–239 (VIIVTLQGLALFCLLLAGVRF), 241–261 (LGQWFHLGLVIAAGCFAWEFW), and 270–290 (VCFKAFLHNHWAGLAILAGIV).

The protein belongs to the UbiA prenyltransferase family. Mg(2+) is required as a cofactor.

The protein resides in the cell inner membrane. It carries out the reaction all-trans-octaprenyl diphosphate + 4-hydroxybenzoate = 4-hydroxy-3-(all-trans-octaprenyl)benzoate + diphosphate. The protein operates within cofactor biosynthesis; ubiquinone biosynthesis. In terms of biological role, catalyzes the prenylation of para-hydroxybenzoate (PHB) with an all-trans polyprenyl group. Mediates the second step in the final reaction sequence of ubiquinone-8 (UQ-8) biosynthesis, which is the condensation of the polyisoprenoid side chain with PHB, generating the first membrane-bound Q intermediate 3-octaprenyl-4-hydroxybenzoate. The protein is 4-hydroxybenzoate octaprenyltransferase of Stutzerimonas stutzeri (strain A1501) (Pseudomonas stutzeri).